We begin with the raw amino-acid sequence, 199 residues long: Adenylyl-sulfate kinase (199 aa).

Residue 31–38 (GLSGSGKS) participates in ATP binding. Catalysis depends on serine 105, which acts as the Phosphoserine intermediate.

The protein belongs to the APS kinase family.

The enzyme catalyses adenosine 5'-phosphosulfate + ATP = 3'-phosphoadenylyl sulfate + ADP + H(+). Its pathway is sulfur metabolism; hydrogen sulfide biosynthesis; sulfite from sulfate: step 2/3. Functionally, catalyzes the synthesis of activated sulfate. The chain is Adenylyl-sulfate kinase from Marinobacter nauticus (strain ATCC 700491 / DSM 11845 / VT8) (Marinobacter aquaeolei).